We begin with the raw amino-acid sequence, 224 residues long: Putative homeobox protein R749 (224 aa).

Residues 139 to 162 (KTKTIKKSTSEKKTSPKKKTTSQQ) are disordered. Residues 161-220 (QQIKRVRLSDEERNILESQYSKNNFPSPEIRDELAKKIGKTPRQVQIWFQNKRCKDRKNL) constitute a DNA-binding region (homeobox).

The protein localises to the host nucleus. In Acanthamoeba polyphaga mimivirus (APMV), this protein is Putative homeobox protein R749.